A 510-amino-acid chain; its full sequence is Serine/threonine-protein kinase RIO3 (510 aa).

Disordered regions lie at residues 100–126 (GSSS…ENED) and 143–191 (DEEN…DMVG). Basic and acidic residues-rich tracts occupy residues 108–118 (TPDRYHPKTMQ) and 162–179 (TKHD…KTFN). The 276-residue stretch at 235-510 (LLLLKWINQG…RGISPAREYN (276 aa)) folds into the Protein kinase domain. Residues 241 to 249 (INQGVFDSV) and lysine 275 contribute to the ATP site. Aspartate 388 (proton acceptor) is an active-site residue. Positions 474-499 (RSVDLRHDKSRPADMELKKYNEEKKA) are enriched in basic and acidic residues. A disordered region spans residues 474-510 (RSVDLRHDKSRPADMELKKYNEEKKANRGISPAREYN).

It belongs to the protein kinase superfamily. RIO-type Ser/Thr kinase family. It depends on Mg(2+) as a cofactor. As to expression, expressed in tail neurons (PVQ and PHAL/PQR).

It catalyses the reaction L-seryl-[protein] + ATP = O-phospho-L-seryl-[protein] + ADP + H(+). The catalysed reaction is L-threonyl-[protein] + ATP = O-phospho-L-threonyl-[protein] + ADP + H(+). This Caenorhabditis elegans protein is Serine/threonine-protein kinase RIO3 (riok-3).